Reading from the N-terminus, the 138-residue chain is Acidic phospholipase A2 1 (138 aa).

The N-terminal stretch at 1-16 (MRTLWIMAVLLVGVEG) is a signal peptide. Disulfide bonds link Cys-42/Cys-131, Cys-44/Cys-60, Cys-59/Cys-111, Cys-65/Cys-138, Cys-66/Cys-104, Cys-73/Cys-97, and Cys-91/Cys-102. Positions 43, 45, and 47 each coordinate Ca(2+). The active site involves His-63. Asp-64 is a Ca(2+) binding site. The active site involves Asp-105.

The protein belongs to the phospholipase A2 family. Group II subfamily. D49 sub-subfamily. Requires Ca(2+) as cofactor. Expressed by the venom gland.

The protein localises to the secreted. The enzyme catalyses a 1,2-diacyl-sn-glycero-3-phosphocholine + H2O = a 1-acyl-sn-glycero-3-phosphocholine + a fatty acid + H(+). In terms of biological role, snake venom phospholipase A2 (PLA2) that has high lipolytic activity. PLA2 catalyzes the calcium-dependent hydrolysis of the 2-acyl groups in 3-sn-phosphoglycerides. This is Acidic phospholipase A2 1 from Craspedocephalus gramineus (Bamboo pit viper).